The chain runs to 281 residues: MIKLGFHVSIAGSLPLAVSRAQEAGCDTFQIFTRSPRVWAAKPIEPSIAEAFIDALNISGIGPVVDHMPYLPNPAAEKPEIYARSIFTMTEELDRCDQLKIPYLVTHLGHHGKEDGHKKGQEKVIAAIGQALDESEGETMILLENTANEKNTVGGTFTDIGVISDALSNERRVGFCFDTCHAAAAGYDLKGHGAETVFGWFNDEAGSLDRLKVIHLNDMKGGVGSHLDRHEHLGLGYLGEETIHDVLTFPKISHCAFIMETPSDEIRTDKDNLAVARRLAV.

Zn(2+) contacts are provided by histidine 67, histidine 107, glutamate 144, aspartate 178, histidine 181, histidine 215, aspartate 228, histidine 230, and glutamate 260.

Belongs to the AP endonuclease 2 family. Requires Zn(2+) as cofactor.

The enzyme catalyses Endonucleolytic cleavage to 5'-phosphooligonucleotide end-products.. Its function is as follows. Endonuclease IV plays a role in DNA repair. It cleaves phosphodiester bonds at apurinic or apyrimidinic (AP) sites, generating a 3'-hydroxyl group and a 5'-terminal sugar phosphate. The protein is Probable endonuclease 4 of Methanocorpusculum labreanum (strain ATCC 43576 / DSM 4855 / Z).